The chain runs to 126 residues: Aspartate 1-decarboxylase (126 aa).

Residue Ser-25 is the Schiff-base intermediate with substrate; via pyruvic acid of the active site. Ser-25 is modified (pyruvic acid (Ser)). Residue Thr-57 coordinates substrate. The Proton donor role is filled by Tyr-58. 73-75 is a substrate binding site; it reads GGA.

Belongs to the PanD family. In terms of assembly, heterooctamer of four alpha and four beta subunits. The cofactor is pyruvate. Post-translationally, is synthesized initially as an inactive proenzyme, which is activated by self-cleavage at a specific serine bond to produce a beta-subunit with a hydroxyl group at its C-terminus and an alpha-subunit with a pyruvoyl group at its N-terminus.

It is found in the cytoplasm. The enzyme catalyses L-aspartate + H(+) = beta-alanine + CO2. Its pathway is cofactor biosynthesis; (R)-pantothenate biosynthesis; beta-alanine from L-aspartate: step 1/1. In terms of biological role, catalyzes the pyruvoyl-dependent decarboxylation of aspartate to produce beta-alanine. The chain is Aspartate 1-decarboxylase from Stenotrophomonas maltophilia (strain K279a).